Consider the following 355-residue polypeptide: MIPRKRYGSKNTDQGVYLGLSKTQVLSPATAINSSSDIAPLPTPVALVPSPPDTMSCRDRTQEFLSACKSLQSRQNGIQTNKPALHATRQCSEFTLMARRIGKDLSNTFAKLEKLTILAKRKSLFDDKAVEIEELTYIIKQDINSLNKQIAQLQDFVRAKGSQSGRHLQTHSNTIVVSLQSKLASMSNDFKSVLEVRTENLKQQRNRREQFSRAPVSALPLAPNNLGGGPIVLGGESRASRDVAIDMMDPRTSQQLQLIDEQDSYIQSRADTMQNIESTIVELGSIFQQLAHMVKEQEETIQRIDENVLGAQLDVEAAHSEILKYFQSVTSNRWLMVKIFLILIVFFIIFVVFLA.

Residues 1–333 (MIPRKRYGSK…KYFQSVTSNR (333 aa)) are Cytoplasmic-facing. An IxM motif; signal for cargo packaging into COPII-coated vesicles motif is present at residues 245-247 (IDM). In terms of domain architecture, t-SNARE coiled-coil homology spans 263 to 325 (DSYIQSRADT…EAAHSEILKY (63 aa)). Residues 287–318 (FQQLAHMVKEQEETIQRIDENVLGAQLDVEAA) adopt a coiled-coil conformation. The chain crosses the membrane as a helical; Anchor for type IV membrane protein span at residues 334-354 (WLMVKIFLILIVFFIIFVVFL). Ala-355 is a topological domain (vesicular).

This sequence belongs to the syntaxin family. Part of a ternary complex containing STX5A, NSFL1C and VCP. Part of a unique SNARE complex composed of the Golgi SNAREs GOSR1, GOSR2 and YKT6. This complex also includes VTI1A. Component of a SNARE complex consisting of STX5, YKT6, GOSR1 and BET1L. Interacts with BET1L. Interacts with BET1. Interacts with COG4. Interacts with GM130/GOLGA2. Interacts (via IxM motif) with SEC24C and SEC24D; mediates STX5 packaging into COPII-coated vesicles. Interacts with VLDLR; this interaction mediates VLDLR translocation from the endoplasmic reticulum to the plasma membrane. Expressed in the brain, heart, spleen, lung, liver, kidney and testis.

It is found in the endoplasmic reticulum-Golgi intermediate compartment membrane. The protein resides in the golgi apparatus membrane. Mediates endoplasmic reticulum to Golgi transport. Together with p115/USO1 and GM130/GOLGA2, involved in vesicle tethering and fusion at the cis-Golgi membrane to maintain the stacked and inter-connected structure of the Golgi apparatus. In terms of biological role, required for Golgi to endoplasmic reticulum retrogade transport, and for intra-Golgi transport. The chain is Syntaxin-5 (Stx5) from Rattus norvegicus (Rat).